A 396-amino-acid polypeptide reads, in one-letter code: 1-deoxy-D-xylulose 5-phosphate reductoisomerase (396 aa).

Residues Thr13, Gly14, Ser15, Ile16, and Asn127 each contribute to the NADPH site. 1-deoxy-D-xylulose 5-phosphate is bound at residue Lys128. Glu129 is an NADPH binding site. Asp153 lines the Mn(2+) pocket. Ser154, Glu155, Ser184, and His207 together coordinate 1-deoxy-D-xylulose 5-phosphate. Residue Glu155 coordinates Mn(2+). An NADPH-binding site is contributed by Gly213. Residues Ser220, Asn225, Lys226, and Glu229 each coordinate 1-deoxy-D-xylulose 5-phosphate. Glu229 contributes to the Mn(2+) binding site.

This sequence belongs to the DXR family. Mg(2+) is required as a cofactor. The cofactor is Mn(2+).

It carries out the reaction 2-C-methyl-D-erythritol 4-phosphate + NADP(+) = 1-deoxy-D-xylulose 5-phosphate + NADPH + H(+). Its pathway is isoprenoid biosynthesis; isopentenyl diphosphate biosynthesis via DXP pathway; isopentenyl diphosphate from 1-deoxy-D-xylulose 5-phosphate: step 1/6. Functionally, catalyzes the NADPH-dependent rearrangement and reduction of 1-deoxy-D-xylulose-5-phosphate (DXP) to 2-C-methyl-D-erythritol 4-phosphate (MEP). The sequence is that of 1-deoxy-D-xylulose 5-phosphate reductoisomerase from Pseudomonas syringae pv. tomato (strain ATCC BAA-871 / DC3000).